We begin with the raw amino-acid sequence, 129 residues long: MAKEPTRVRRRERKNIVSGVAHVNASFNNTMITITDAQGNTISWSSAGAMGFKGSRKSTPYAAQVAAEDAGRKAAEHGMRTLEVEVSGPGSGRESALRALQAAGFTVTSIRDVTSIPHNGCRPRKRRRV.

Belongs to the universal ribosomal protein uS11 family. As to quaternary structure, part of the 30S ribosomal subunit. Interacts with proteins S7 and S18. Binds to IF-3.

Functionally, located on the platform of the 30S subunit, it bridges several disparate RNA helices of the 16S rRNA. Forms part of the Shine-Dalgarno cleft in the 70S ribosome. In Methylorubrum populi (strain ATCC BAA-705 / NCIMB 13946 / BJ001) (Methylobacterium populi), this protein is Small ribosomal subunit protein uS11.